The chain runs to 603 residues: Serine/threonine-protein kinase PLK1 (603 aa).

Residues 1-15 (MNAAAKAGKLARAPA) are compositionally biased toward low complexity. A disordered region spans residues 1-32 (MNAAAKAGKLARAPADLGKGGVPGDAAPGAPG). Lys19 participates in a covalent cross-link: Glycyl lysine isopeptide (Lys-Gly) (interchain with G-Cter in ubiquitin). In terms of domain architecture, Protein kinase spans 53–305 (YVRGRFLGKG…IHELLNDEFF (253 aa)). ATP-binding positions include 59–67 (LGKGGFAKC) and Lys82. A Phosphoserine modification is found at Ser103. Residue Glu131 participates in ATP binding. Ser137 carries the post-translational modification Phosphoserine. Catalysis depends on Asp176, which acts as the Proton acceptor. Residues 178-181 (KLGN) and Asp194 each bind ATP. The tract at residues 194 to 221 (DFGLATKVEYEGERKKTLCGTPNYIAPE) is activation loop. Thr210 carries the post-translational modification Phosphothreonine; by AURKA. Phosphothreonine is present on Thr214. Phosphoserine; by autocatalysis occurs at positions 269 and 335. Residues 337 to 340 (RKPL) carry the D-box that targets the protein for proteasomal degradation in anaphase motif. A Glycyl lysine isopeptide (Lys-Gly) (interchain with G-Cter in SUMO2) cross-link involves residue Lys338. The tract at residues 338–361 (KPLTVLNKGVENPLPDRPREKEEP) is disordered. A compositionally biased stretch (basic and acidic residues) spans 351–361 (LPDRPREKEEP). Ser375 and Ser450 each carry phosphoserine. A POLO box 1 domain is found at 410–488 (WVSKWVDYSD…LNYFRNYMSE (79 aa)). Residue Lys492 forms a Glycyl lysine isopeptide (Lys-Gly) (interchain with G-Cter in ubiquitin) linkage. The linker stretch occupies residues 493–507 (AGANITPREGDELAR). A Phosphothreonine modification is found at Thr498. Positions 510-592 (YLRTWFRTRS…ARTMVDKLLS (83 aa)) constitute a POLO box 2 domain. The important for interaction with phosphorylated proteins stretch occupies residues 538–540 (HTK).

Belongs to the protein kinase superfamily. Ser/Thr protein kinase family. CDC5/Polo subfamily. In terms of assembly, interacts with CEP170 and EVI5. Interacts and phosphorylates ERCC6L. Interacts with FAM29A. Interacts with SLX4/BTBD12 and TTDN1. Interacts with BUB1B. Interacts (via POLO-box domain) with the phosphorylated form of BUB1, CENPU and CDC25C. Interacts with isoform 3 of SGO1. Interacts with BORA, KIF2A and AURKA. Interacts with TOPORS and CYLD. Interacts with ECT2; the interaction is stimulated upon phosphorylation of ECT2 on 'Thr-444'. Interacts with PRC1. Interacts with KIF20A/MKLP2 (when phosphorylated), leading to the recruitment at the central spindle. Interacts (via POLO box domains) with PPP1R12A/MYPT1 (when previously phosphorylated by CDK1). Part of an astrin (SPAG5)-kinastrin (SKAP) complex containing KNSTRN, SPAG5, PLK1, DYNLL1 and SGO2. Interacts with BIRC6/bruce. Interacts with CDK1-phosphorylated FRY; this interaction occurs in mitotic cells, but not in interphase cells. FRY interaction facilitates AURKA-mediated PLK1 phosphorylation. Interacts with CDK1-phosphorylated DCTN6 during mitotic prometaphase; the interaction facilitates recruitment to kinetochores. Interacts with CEP68; the interaction phosphorylates CEP68. Interacts (via POLO-box domain) with DCTN1. Interacts with CEP20 in later G1, S, G2 and M phases of the cell cycle; this interaction recruits PLK1 to centrosomes, a step required for S phase progression. Interacts with HSF1; this interaction increases upon heat shock but does not modulate neither HSF1 homotrimerization nor DNA-binding activities. Interacts with HNRNPU; this interaction induces phosphorylation of HNRNPU in mitosis. Interacts (via its N-terminus) with RIOK2. Interacts with KLHL22. Interacts (via POLO box domains) with NEDD9/HEF1 (via C-terminus). Interacts (via RVxF motif) with FIRRM; regulates PLK1 kinase activity. Interacts with SKA3; the interaction promotes the stability of PLK1. Interacts with the MTMR3:MTMR4 heterooligomer; brings CEP55 and PLK1 together during early mitosis, regulating the phosphorylation of CEP55 by PLK1 and its recruitment to the midbody where it can mediate cell abscission. Catalytic activity is enhanced by phosphorylation of Thr-210. Phosphorylation at Thr-210 is first detected on centrosomes in the G2 phase of the cell cycle, peaks in prometaphase and gradually disappears from centrosomes during anaphase. Dephosphorylation at Thr-210 at centrosomes is probably mediated by protein phosphatase 1C (PP1C), via interaction with PPP1R12A/MYPT1. Autophosphorylation and phosphorylation of Ser-137 may not be significant for the activation of PLK1 during mitosis, but may enhance catalytic activity during recovery after DNA damage checkpoint. Phosphorylated in vitro by STK10. Post-translationally, ubiquitinated by the anaphase promoting complex/cyclosome (APC/C) in anaphase and following DNA damage, leading to its degradation by the proteasome. Ubiquitination is mediated via its interaction with FZR1/CDH1. Ubiquitination and subsequent degradation prevents entry into mitosis and is essential to maintain an efficient G2 DNA damage checkpoint. Monoubiquitination at Lys-492 by the BCR(KLHL22) ubiquitin ligase complex does not lead to degradation: it promotes PLK1 dissociation from phosphoreceptor proteins and subsequent removal from kinetochores, allowing silencing of the spindle assembly checkpoint (SAC) and chromosome segregation.

Its subcellular location is the nucleus. It localises to the chromosome. The protein resides in the centromere. The protein localises to the kinetochore. It is found in the cytoplasm. Its subcellular location is the cytoskeleton. It localises to the microtubule organizing center. The protein resides in the centrosome. The protein localises to the spindle. It is found in the midbody. The enzyme catalyses L-seryl-[protein] + ATP = O-phospho-L-seryl-[protein] + ADP + H(+). The catalysed reaction is L-threonyl-[protein] + ATP = O-phospho-L-threonyl-[protein] + ADP + H(+). With respect to regulation, activated by phosphorylation of Thr-210 by AURKA; phosphorylation by AURKA is enhanced by BORA. Once activated, activity is stimulated by binding target proteins. Binding of target proteins has no effect on the non-activated kinase. Several inhibitors targeting PLKs are currently in development and are under investigation in a growing number of clinical trials, such as BI 2536, an ATP-competitive PLK1 inhibitor or BI 6727, a dihydropteridinone that specifically inhibits the catalytic activity of PLK1. Functionally, serine/threonine-protein kinase that performs several important functions throughout M phase of the cell cycle, including the regulation of centrosome maturation and spindle assembly, the removal of cohesins from chromosome arms, the inactivation of anaphase-promoting complex/cyclosome (APC/C) inhibitors, and the regulation of mitotic exit and cytokinesis. Polo-like kinase proteins act by binding and phosphorylating proteins that are already phosphorylated on a specific motif recognized by the POLO box domains. Phosphorylates BORA, BUB1B/BUBR1, CCNB1, CDC25C, CEP55, ECT2, ERCC6L, FBXO5/EMI1, FOXM1, KIF20A/MKLP2, CENPU, NEDD1, NINL, NPM1, NUDC, PKMYT1/MYT1, KIZ, PPP1R12A/MYPT1, PRC1, RACGAP1/CYK4, RHNO1, SGO1, STAG2/SA2, TEX14, TOPORS, p73/TP73, TPT1, WEE1 and HNRNPU. Plays a key role in centrosome functions and the assembly of bipolar spindles by phosphorylating KIZ, NEDD1 and NINL. NEDD1 phosphorylation promotes subsequent targeting of the gamma-tubulin ring complex (gTuRC) to the centrosome, an important step for spindle formation. Phosphorylation of NINL component of the centrosome leads to NINL dissociation from other centrosomal proteins. Involved in mitosis exit and cytokinesis by phosphorylating CEP55, ECT2, KIF20A/MKLP2, CENPU, PRC1 and RACGAP1. Recruited at the central spindle by phosphorylating and docking PRC1 and KIF20A/MKLP2; creates its own docking sites on PRC1 and KIF20A/MKLP2 by mediating phosphorylation of sites subsequently recognized by the POLO box domains. Phosphorylates RACGAP1, thereby creating a docking site for the Rho GTP exchange factor ECT2 that is essential for the cleavage furrow formation. Promotes the central spindle recruitment of ECT2. Plays a central role in G2/M transition of mitotic cell cycle by phosphorylating CCNB1, CDC25C, FOXM1, CENPU, PKMYT1/MYT1, PPP1R12A/MYPT1 and WEE1. Part of a regulatory circuit that promotes the activation of CDK1 by phosphorylating the positive regulator CDC25C and inhibiting the negative regulators WEE1 and PKMYT1/MYT1. Also acts by mediating phosphorylation of cyclin-B1 (CCNB1) on centrosomes in prophase. Phosphorylates FOXM1, a key mitotic transcription regulator, leading to enhance FOXM1 transcriptional activity. Involved in kinetochore functions and sister chromatid cohesion by phosphorylating BUB1B/BUBR1, FBXO5/EMI1 and STAG2/SA2. PLK1 is high on non-attached kinetochores suggesting a role of PLK1 in kinetochore attachment or in spindle assembly checkpoint (SAC) regulation. Required for kinetochore localization of BUB1B. Regulates the dissociation of cohesin from chromosomes by phosphorylating cohesin subunits such as STAG2/SA2. Phosphorylates SGO1: required for spindle pole localization of isoform 3 of SGO1 and plays a role in regulating its centriole cohesion function. Mediates phosphorylation of FBXO5/EMI1, a negative regulator of the APC/C complex during prophase, leading to FBXO5/EMI1 ubiquitination and degradation by the proteasome. Acts as a negative regulator of p53 family members: phosphorylates TOPORS, leading to inhibit the sumoylation of p53/TP53 and simultaneously enhance the ubiquitination and subsequent degradation of p53/TP53. Phosphorylates the transactivation domain of the transcription factor p73/TP73, leading to inhibit p73/TP73-mediated transcriptional activation and pro-apoptotic functions. Phosphorylates BORA, and thereby promotes the degradation of BORA. Contributes to the regulation of AURKA function. Also required for recovery after DNA damage checkpoint and entry into mitosis. Phosphorylates MISP, leading to stabilization of cortical and astral microtubule attachments required for proper spindle positioning. Together with MEIKIN, acts as a regulator of kinetochore function during meiosis I: required both for mono-orientation of kinetochores on sister chromosomes and protection of centromeric cohesin from separase-mediated cleavage. Phosphorylates CEP68 and is required for its degradation. Regulates nuclear envelope breakdown during prophase by phosphorylating DCTN1 resulting in its localization in the nuclear envelope. Phosphorylates the heat shock transcription factor HSF1, promoting HSF1 nuclear translocation upon heat shock. Phosphorylates HSF1 also in the early mitotic period; this phosphorylation regulates HSF1 localization to the spindle pole, the recruitment of the SCF(BTRC) ubiquitin ligase complex induicing HSF1 degradation, and hence mitotic progression. Regulates mitotic progression by phosphorylating RIOK2. Through the phosphorylation of DZIP1 regulates the localization during mitosis of the BBSome, a ciliary protein complex involved in cilium biogenesis. Regulates DNA repair during mitosis by mediating phosphorylation of POLQ and RHNO1, thereby promoting POLQ recruitment to DNA damage sites. Phosphorylates ATXN10 which may play a role in the regulation of cytokinesis and may stimulate the proteasome-mediated degradation of ATXN10. This chain is Serine/threonine-protein kinase PLK1 (Plk1), found in Rattus norvegicus (Rat).